The following is a 90-amino-acid chain: RNA-binding protein Hfq (90 aa).

A Sm domain is found at 9–69 (DRFLNHLRVN…ISTIIPSSYV (61 aa)).

It belongs to the Hfq family. As to quaternary structure, homohexamer.

In terms of biological role, RNA chaperone that binds small regulatory RNA (sRNAs) and mRNAs to facilitate mRNA translational regulation in response to envelope stress, environmental stress and changes in metabolite concentrations. Also binds with high specificity to tRNAs. The protein is RNA-binding protein Hfq of Thermotoga sp. (strain RQ2).